The primary structure comprises 271 residues: 3-methyl-2-oxobutanoate hydroxymethyltransferase (271 aa).

The Mg(2+) site is built by aspartate 51 and aspartate 90. 3-methyl-2-oxobutanoate contacts are provided by residues 51–52 (DS), aspartate 90, and lysine 118. Residue glutamate 120 participates in Mg(2+) binding. Glutamate 186 serves as the catalytic Proton acceptor.

This sequence belongs to the PanB family. In terms of assembly, homodecamer; pentamer of dimers. It depends on Mg(2+) as a cofactor.

The protein localises to the cytoplasm. It carries out the reaction 3-methyl-2-oxobutanoate + (6R)-5,10-methylene-5,6,7,8-tetrahydrofolate + H2O = 2-dehydropantoate + (6S)-5,6,7,8-tetrahydrofolate. It participates in cofactor biosynthesis; (R)-pantothenate biosynthesis; (R)-pantoate from 3-methyl-2-oxobutanoate: step 1/2. Its function is as follows. Catalyzes the reversible reaction in which hydroxymethyl group from 5,10-methylenetetrahydrofolate is transferred onto alpha-ketoisovalerate to form ketopantoate. The chain is 3-methyl-2-oxobutanoate hydroxymethyltransferase from Xanthomonas euvesicatoria pv. vesicatoria (strain 85-10) (Xanthomonas campestris pv. vesicatoria).